The primary structure comprises 128 residues: MARQQRRGRKVKKNVPNGVAYIQSTFNNTIVTITDPNGDVVSWASAGSTGFKGAKKGTPFAAQMAAESAARQAMENGMRQIEVMVSGPGAGRETAIRALQATGLEITLIRDITPIPHNGCRPPKRRRV.

It belongs to the universal ribosomal protein uS11 family. Part of the 30S ribosomal subunit. Interacts with proteins S7 and S18. Binds to IF-3.

Functionally, located on the platform of the 30S subunit, it bridges several disparate RNA helices of the 16S rRNA. Forms part of the Shine-Dalgarno cleft in the 70S ribosome. This is Small ribosomal subunit protein uS11 from Synechococcus sp. (strain JA-3-3Ab) (Cyanobacteria bacterium Yellowstone A-Prime).